The sequence spans 157 residues: Urease accessory protein UreE (157 aa).

This sequence belongs to the UreE family.

The protein localises to the cytoplasm. Its function is as follows. Involved in urease metallocenter assembly. Binds nickel. Probably functions as a nickel donor during metallocenter assembly. This chain is Urease accessory protein UreE, found in Corynebacterium glutamicum (strain ATCC 13032 / DSM 20300 / JCM 1318 / BCRC 11384 / CCUG 27702 / LMG 3730 / NBRC 12168 / NCIMB 10025 / NRRL B-2784 / 534).